Consider the following 67-residue polypeptide: Penaeidin-4a (67 aa).

Residues 1–19 (MRLVVCLVFLASFALVCQG) form the signal peptide. 3 disulfides stabilise this stretch: Cys-42–Cys-56, Cys-45–Cys-63, and Cys-57–Cys-64. Residue Arg-66 is modified to Arginine amide.

Belongs to the penaeidin family.

It localises to the cytoplasmic granule. Antibacterial and antifungal activity. Presents chitin-binding activity. The protein is Penaeidin-4a of Penaeus vannamei (Whiteleg shrimp).